The primary structure comprises 449 residues: MDNNTVITINTSDDTLQTYYSTIAKCPSLTSLINDNTISLNIRTNHMVMILNYFRNINSIQYLYPIANVARKLGIEFNEDGYVYINIGGKIFYVEKKLMSNKLGYFEAFFRNYNQLDPDYSSILIDRCPNLFAKIMSFLTMSNQELSGTTRLELQYYCYNLRNYFIKLEHFKYMDYLLDHYCSHNYRLVTDMNISDNTVKTTLENSQNIYAIFFKNRIDIKTLKDNISIKINNIESNTNLLILSNELVFDDNFIFIKLESDKKLPCDIEITFPDTTIISGDSCFFKTKFRCDKHNGIIRDTSSHNVTSKNGNIYTVDVDIDQNKITIPVKNLITNIFNEQEVDKFSDVLVSDIIFVTDKFSLKGAYVELSCNTINESINCSENSQIIAKCSLKKSFGSKQKYRINFPFTTKYIKNVLPHYSGNYEIVINLENKYEGPLYLKYRTIAIHK.

A BTB domain is found at E79–G148.

The protein belongs to the mimivirus BTB/WD family.

In Acanthamoeba polyphaga mimivirus (APMV), this protein is Putative BTB/POZ domain-containing protein L742.